Consider the following 212-residue polypeptide: Ribosomal RNA small subunit methyltransferase G (212 aa).

Residues Gly-80, Leu-85, 131 to 132, and Arg-146 contribute to the S-adenosyl-L-methionine site; that span reads AE.

Belongs to the methyltransferase superfamily. RNA methyltransferase RsmG family.

Its subcellular location is the cytoplasm. It catalyses the reaction guanosine(527) in 16S rRNA + S-adenosyl-L-methionine = N(7)-methylguanosine(527) in 16S rRNA + S-adenosyl-L-homocysteine. In terms of biological role, specifically methylates the N7 position of guanine in position 527 of 16S rRNA. In Stenotrophomonas maltophilia (strain R551-3), this protein is Ribosomal RNA small subunit methyltransferase G.